A 134-amino-acid chain; its full sequence is ATP synthase epsilon chain (134 aa).

Belongs to the ATPase epsilon chain family. In terms of assembly, F-type ATPases have 2 components, CF(1) - the catalytic core - and CF(0) - the membrane proton channel. CF(1) has five subunits: alpha(3), beta(3), gamma(1), delta(1), epsilon(1). CF(0) has three main subunits: a, b and c. In this bacterium the a and b subunits are transcribed but do not seem to be translated, thus the ATP synthase consists of the alpha, beta, gamma, delta, epsilon and c subunits.

Its subcellular location is the cell membrane. Functionally, produces ATP from ADP in the presence of a proton gradient across the membrane. This chain is ATP synthase epsilon chain, found in Moorella thermoacetica (strain ATCC 39073 / JCM 9320).